Consider the following 249-residue polypeptide: O-methyltransferase adaD (249 aa).

Over residues M1–T15 the composition is skewed to low complexity. The disordered stretch occupies residues M1–Q26.

This sequence belongs to the methyltransferase superfamily.

The catalysed reaction is 2-acetyl-3,4a,8,10,11,12a-hexahydroxy-1,4,4a,5,12,12a-hexahydrotetracene-1,12-dione + S-adenosyl-L-methionine = TAN-1612 + S-adenosyl-L-homocysteine + H(+). It functions in the pathway secondary metabolite biosynthesis. Functionally, O-methyltransferase; part of the gene cluster that mediates the biosynthesis of the linear tetracyclic TAN-1612 neuropeptide Y receptor antagonist. The decaketide backbone of TAN-1612 is synthesized by the non-reducing polyketide synthase adaA via condensation of one acetyl-CoA starter unit with 9 malonyl-CoA units. The FAD-dependent monooxygenase adaC then performs hydroxylation at C2 while the polaketide chain is still attached to the NRPKS adaA. The alpha-hydroxylation step at C2 appears to be crucial for the following C18-C1 Claisen cyclization and release of the C9-hydroxyl version of TAN-1612 from the NRPKS adaA, two steps performed by the lactamase-like protein adaB. Finally, the O-methyltransferase adaD performs the C9 O-methylation to complete the biosynthesis of TAN-1612. This chain is O-methyltransferase adaD, found in Aspergillus niger.